The sequence spans 140 residues: Nucleoside diphosphate kinase (140 aa).

The ATP site is built by K9, F57, R85, T91, R102, and N112. H115 serves as the catalytic Pros-phosphohistidine intermediate.

This sequence belongs to the NDK family. As to quaternary structure, homotetramer. The cofactor is Mg(2+).

Its subcellular location is the cytoplasm. The enzyme catalyses a 2'-deoxyribonucleoside 5'-diphosphate + ATP = a 2'-deoxyribonucleoside 5'-triphosphate + ADP. It carries out the reaction a ribonucleoside 5'-diphosphate + ATP = a ribonucleoside 5'-triphosphate + ADP. In terms of biological role, major role in the synthesis of nucleoside triphosphates other than ATP. The ATP gamma phosphate is transferred to the NDP beta phosphate via a ping-pong mechanism, using a phosphorylated active-site intermediate. The polypeptide is Nucleoside diphosphate kinase (Chlorobaculum parvum (strain DSM 263 / NCIMB 8327) (Chlorobium vibrioforme subsp. thiosulfatophilum)).